The following is a 308-amino-acid chain: GTP cyclohydrolase FolE2 (308 aa).

The protein belongs to the GTP cyclohydrolase IV family.

It carries out the reaction GTP + H2O = 7,8-dihydroneopterin 3'-triphosphate + formate + H(+). It participates in cofactor biosynthesis; 7,8-dihydroneopterin triphosphate biosynthesis; 7,8-dihydroneopterin triphosphate from GTP: step 1/1. Its function is as follows. Converts GTP to 7,8-dihydroneopterin triphosphate. The polypeptide is GTP cyclohydrolase FolE2 (Colwellia psychrerythraea (strain 34H / ATCC BAA-681) (Vibrio psychroerythus)).